The chain runs to 1344 residues: Regulatory-associated protein of TOR 1 (1344 aa).

Residues 28–44 (CVSSHDDGDSRRKDSEA) are compositionally biased toward basic and acidic residues. 2 disordered regions span residues 28 to 56 (CVSSHDDGDSRRKDSEAKSSSSYGNGTTE) and 771 to 818 (ASTD…DSVS). A compositionally biased stretch (low complexity) spans 785-816 (SSSPLGSSGLMQGSPLSDDSSLHSDSGMMHDS). 7 WD repeats span residues 1025 to 1064 (RFETGTKTALLHPFSPIVVAADENERIRVWNYEEATLLNG), 1070 to 1111 (FPDK…GKQK), 1125 to 1164 (GARDLNAVVDWQQQSGYLYASGETSTVTLWDLEKEQLVRS), 1168 to 1208 (ESEC…PLVC), 1214 to 1255 (QKVE…DTYL), 1259 to 1298 (AHRGSLTALAVHRHAPIIASGSAKQLIKVFSLQGEQLGII), and 1307 to 1344 (QKIGSVSCLTFHPYQVLLAAGAADSFVSIYTHDNSQAR).

It belongs to the WD repeat RAPTOR family. In terms of assembly, interacts with TOR, ATPK1 and ML1. Interacts with KIN10. In terms of processing, phosphorylated by KIN10. Expressed in roots, leaves, flowers and seeds.

The protein resides in the cytoplasm. In terms of biological role, probable component of the plant TOR kinase pathway that recruits substrates for TOR. Modulates plant cell growth and regulates the activity of ATPK1 kinase in response to osmotic stress. The protein is Regulatory-associated protein of TOR 1 (RAPTOR1) of Arabidopsis thaliana (Mouse-ear cress).